The following is a 158-amino-acid chain: NAD(P)H-quinone oxidoreductase subunit J, chloroplastic (158 aa).

This sequence belongs to the complex I 30 kDa subunit family. As to quaternary structure, NDH is composed of at least 16 different subunits, 5 of which are encoded in the nucleus.

Its subcellular location is the plastid. It localises to the chloroplast thylakoid membrane. The catalysed reaction is a plastoquinone + NADH + (n+1) H(+)(in) = a plastoquinol + NAD(+) + n H(+)(out). It catalyses the reaction a plastoquinone + NADPH + (n+1) H(+)(in) = a plastoquinol + NADP(+) + n H(+)(out). NDH shuttles electrons from NAD(P)H:plastoquinone, via FMN and iron-sulfur (Fe-S) centers, to quinones in the photosynthetic chain and possibly in a chloroplast respiratory chain. The immediate electron acceptor for the enzyme in this species is believed to be plastoquinone. Couples the redox reaction to proton translocation, and thus conserves the redox energy in a proton gradient. The protein is NAD(P)H-quinone oxidoreductase subunit J, chloroplastic of Solanum lycopersicum (Tomato).